A 557-amino-acid chain; its full sequence is Glucose-6-phosphate isomerase (557 aa).

The active-site Proton donor is the E359. Active-site residues include H390 and K518.

Belongs to the GPI family.

The protein localises to the cytoplasm. It catalyses the reaction alpha-D-glucose 6-phosphate = beta-D-fructose 6-phosphate. The protein operates within carbohydrate biosynthesis; gluconeogenesis. It participates in carbohydrate degradation; glycolysis; D-glyceraldehyde 3-phosphate and glycerone phosphate from D-glucose: step 2/4. Catalyzes the reversible isomerization of glucose-6-phosphate to fructose-6-phosphate. The chain is Glucose-6-phosphate isomerase from Hahella chejuensis (strain KCTC 2396).